We begin with the raw amino-acid sequence, 116 residues long: Small ribosomal subunit protein bS16 (116 aa).

The interval 88 to 116 (RNNPKAAVPGKRMAELAKKKADRAAASAE) is disordered. The span at 99-110 (RMAELAKKKADR) shows a compositional bias: basic and acidic residues.

This sequence belongs to the bacterial ribosomal protein bS16 family.

The polypeptide is Small ribosomal subunit protein bS16 (Cereibacter sphaeroides (strain ATCC 17029 / ATH 2.4.9) (Rhodobacter sphaeroides)).